A 199-amino-acid polypeptide reads, in one-letter code: Putative acetyltransferase SAR2635 (199 aa).

This sequence belongs to the transferase hexapeptide repeat family.

The protein is Putative acetyltransferase SAR2635 of Staphylococcus aureus (strain MRSA252).